The chain runs to 303 residues: ATP phosphoribosyltransferase (303 aa).

It belongs to the ATP phosphoribosyltransferase family. Long subfamily. It depends on Mg(2+) as a cofactor.

Its subcellular location is the cytoplasm. The enzyme catalyses 1-(5-phospho-beta-D-ribosyl)-ATP + diphosphate = 5-phospho-alpha-D-ribose 1-diphosphate + ATP. It functions in the pathway amino-acid biosynthesis; L-histidine biosynthesis; L-histidine from 5-phospho-alpha-D-ribose 1-diphosphate: step 1/9. With respect to regulation, feedback inhibited by histidine. Functionally, catalyzes the condensation of ATP and 5-phosphoribose 1-diphosphate to form N'-(5'-phosphoribosyl)-ATP (PR-ATP). Has a crucial role in the pathway because the rate of histidine biosynthesis seems to be controlled primarily by regulation of HisG enzymatic activity. This is ATP phosphoribosyltransferase from Stenotrophomonas maltophilia (strain R551-3).